The chain runs to 268 residues: Tryptophan synthase alpha chain (268 aa).

Active-site proton acceptor residues include glutamate 49 and aspartate 60.

This sequence belongs to the TrpA family. In terms of assembly, tetramer of two alpha and two beta chains.

It catalyses the reaction (1S,2R)-1-C-(indol-3-yl)glycerol 3-phosphate + L-serine = D-glyceraldehyde 3-phosphate + L-tryptophan + H2O. It functions in the pathway amino-acid biosynthesis; L-tryptophan biosynthesis; L-tryptophan from chorismate: step 5/5. The alpha subunit is responsible for the aldol cleavage of indoleglycerol phosphate to indole and glyceraldehyde 3-phosphate. This Salmonella paratyphi A (strain ATCC 9150 / SARB42) protein is Tryptophan synthase alpha chain.